The primary structure comprises 511 residues: Coatomer subunit delta (511 aa).

Positions 168–177 (QARRDAERQG) are enriched in basic and acidic residues. The disordered stretch occupies residues 168–188 (QARRDAERQGKKAPGFGGFGS). Ser223 bears the Phosphoserine mark. Residues Lys233 and Lys241 each carry the N6-acetyllysine modification. Ser244 carries the post-translational modification Phosphoserine. One can recognise an MHD domain in the interval 271–511 (MESVHMKIEE…TFLVDKYEIL (241 aa)). An N6-acetyllysine mark is found at Lys309 and Lys351. Ser493 is subject to Phosphoserine.

It belongs to the adaptor complexes medium subunit family. Delta-COP subfamily. In terms of assembly, oligomeric complex that consists of at least the alpha, beta, beta', gamma, delta, epsilon and zeta subunits. In terms of tissue distribution, ubiquitously expressed.

It is found in the cytoplasm. Its subcellular location is the golgi apparatus membrane. It localises to the cytoplasmic vesicle. The protein localises to the COPI-coated vesicle membrane. Its function is as follows. Component of the coatomer, a cytosolic protein complex that binds to dilysine motifs and reversibly associates with Golgi non-clathrin-coated vesicles, which further mediate biosynthetic protein transport from the ER, via the Golgi up to the trans Golgi network. The coatomer complex is required for budding from Golgi membranes, and is essential for the retrograde Golgi-to-ER transport of dilysine-tagged proteins. In mammals, the coatomer can only be recruited by membranes associated to ADP-ribosylation factors (ARFs), which are small GTP-binding proteins; the complex also influences the Golgi structural integrity, as well as the processing, activity, and endocytic recycling of LDL receptors. In Homo sapiens (Human), this protein is Coatomer subunit delta (ARCN1).